The sequence spans 481 residues: ATP synthase subunit beta, plastid (481 aa).

162–169 serves as a coordination point for ATP; the sequence is GGAGVGKT.

It belongs to the ATPase alpha/beta chains family. In terms of assembly, F-type ATPases have 2 components, CF(1) - the catalytic core - and CF(0) - the membrane proton channel. CF(1) has five subunits: alpha(3), beta(3), gamma(1), delta(1), epsilon(1). CF(0) has four main subunits: a(1), b(1), b'(1) and c(9-12).

The protein localises to the plastid membrane. The catalysed reaction is ATP + H2O + 4 H(+)(in) = ADP + phosphate + 5 H(+)(out). Functionally, produces ATP from ADP in the presence of a proton gradient across the membrane. The catalytic sites are hosted primarily by the beta subunits. The protein is ATP synthase subunit beta, plastid (atpB) of Prototheca wickerhamii.